Here is a 505-residue protein sequence, read N- to C-terminus: Beta-glucosidase 3 (505 aa).

An N-terminal signal peptide occupies residues 1–22 (MAAAAAFFCALLFISVQHGVLG). 2 residues coordinate a beta-D-glucoside: Gln-43 and His-143. Residue Glu-189 is the Proton donor of the active site. A disulfide bridge connects residues Cys-208 and Cys-217. An N-linked (GlcNAc...) asparagine glycan is attached at Asn-221. A beta-D-glucoside is bound by residues Tyr-333 and Glu-405. The active-site Nucleophile is Glu-405. Residues Asn-415 and Asn-436 are each glycosylated (N-linked (GlcNAc...) asparagine). A beta-D-glucoside is bound by residues Trp-450 and Tyr-466.

This sequence belongs to the glycosyl hydrolase 1 family.

The enzyme catalyses Hydrolysis of terminal, non-reducing beta-D-glucosyl residues with release of beta-D-glucose.. The sequence is that of Beta-glucosidase 3 (BGLU3) from Oryza sativa subsp. japonica (Rice).